A 70-amino-acid polypeptide reads, in one-letter code: Melittin (70 aa).

Positions 1–21 (MKFLVNVALVFMVVYISFIYA) are cleaved as a signal peptide. The propeptide at 22–43 (APEPEPAPEAEAEADAEADPEA) is removed by a dipeptidylpeptidase. Position 44 is an N-formylglycine; partial (Gly-44). Gln-69 carries the post-translational modification Glutamine amide.

Belongs to the melittin family. Monomer (in solution and for integration into membranes), homotetramer (in solution and potentially as a toroidal pore in membranes), and potenially homomultimer (as a toroidal pore in membranes). As to expression, expressed by the venom gland.

It is found in the secreted. Its subcellular location is the target cell membrane. In terms of biological role, main toxin of bee venom with strong hemolytic activity and antimicrobial activity. It has enhancing effects on bee venom phospholipase A2 activity. This amphipathic toxin binds to negatively charged membrane surface and forms pore by inserting into lipid bilayers inducing the leakage of ions and molecules and the enhancement of permeability that ultimately leads to cell lysis. It acts as a voltage-gated pore with higher selectivity for anions over cations. The ion conductance has been shown to be voltage-dependent. Self-association of melittin in membranes is promoted by high ionic strength, but not by the presence of negatively charged lipids. In vivo, intradermal injection into healthy human volunteers produce sharp pain sensation and an inflammatory response. It produces pain by activating primary nociceptor cells directly and indirectly due to its ability to activate plasma membrane phospholipase A2 and its pore-forming activity. This chain is Melittin (MELT), found in Apis cerana cerana (Oriental honeybee).